A 156-amino-acid chain; its full sequence is Small ribosomal subunit protein uS7 (156 aa).

Belongs to the universal ribosomal protein uS7 family. As to quaternary structure, part of the 30S ribosomal subunit. Contacts proteins S9 and S11.

One of the primary rRNA binding proteins, it binds directly to 16S rRNA where it nucleates assembly of the head domain of the 30S subunit. Is located at the subunit interface close to the decoding center, probably blocks exit of the E-site tRNA. This chain is Small ribosomal subunit protein uS7, found in Afipia carboxidovorans (strain ATCC 49405 / DSM 1227 / KCTC 32145 / OM5) (Oligotropha carboxidovorans).